Consider the following 423-residue polypeptide: MKLDKSKELFDEAVNYLPGGVNSPVRAYKPYPFFAKSAKGSKIYDVDGNEYIDYCLGYGPLLFGHANEHIIEKSIEQLKLGTDYGVPSEKEVQLAKEVIKRVPCAQMVRFTNSGTEATMSAIRLARGITKRDKIIKFEGAYHGAHDAVLVKSGSGAAGLPDSPGIPTDTTKNTMLVEFNDEEALKKLINENKDEIACIIVEPVMGNIGCVPPKEGYLDFLREITLENGILLIIDEVITGFRISKGGAQEYYNVIPDLATFGKIVGGGFPIGAIAGKKEYMEQFTPSGKIYQAGTFSGNPMSINGGLAAFEVLDDNSYKQLHKSGEYFRNGIVDILDKLNINFHVNGVESMTQIYFTENEVYDYKTAQTSDTENFLKYFHLLLENGVFIAPSQYECGFISTSHSRDDLDKTLNAIEIALTKLYK.

Position 262 is an N6-(pyridoxal phosphate)lysine (Lys-262).

Belongs to the class-III pyridoxal-phosphate-dependent aminotransferase family. HemL subfamily. The cofactor is pyridoxal 5'-phosphate.

Its subcellular location is the cytoplasm. The enzyme catalyses (S)-4-amino-5-oxopentanoate = 5-aminolevulinate. It participates in porphyrin-containing compound metabolism; protoporphyrin-IX biosynthesis; 5-aminolevulinate from L-glutamyl-tRNA(Glu): step 2/2. The sequence is that of Glutamate-1-semialdehyde 2,1-aminomutase from Methanosphaera stadtmanae (strain ATCC 43021 / DSM 3091 / JCM 11832 / MCB-3).